A 361-amino-acid polypeptide reads, in one-letter code: MNNSILNKLKSLRNRYQEIEIMLTQKNVISNRENLKTLSKEYLKLSEIIKYFIEWEKLEVDIENVNILLNDVEIQGMAEEELYFFNKKKKALEKKINQLLLPEDPNDKHSCFIEIRSATGGDESSIFAGELFRMYLRYAESYSWKVEIMNTSESEKGGFKEIIAKITGRGACGRLKFESGGHRVQRVPETESQGRIHTSTCTVAVMPVTPKTEKEEINSSDLKIDTFRSSGAGGQHVNTTDSAIRITHIPTGNVVECQDERSQHKNKAKALSILSARVYAAKLEKDRQESSSMRKILLGTGERSDRNRTYNFPQNRITDHRINLSIYKLDEVLQGKLDLLIDPIIQEYQADMLSSLSKSES.

N5-methylglutamine is present on Gln-235.

The protein belongs to the prokaryotic/mitochondrial release factor family. Methylated by PrmC. Methylation increases the termination efficiency of RF1.

The protein resides in the cytoplasm. Functionally, peptide chain release factor 1 directs the termination of translation in response to the peptide chain termination codons UAG and UAA. The protein is Peptide chain release factor 1 of Buchnera aphidicola subsp. Acyrthosiphon pisum (strain 5A).